The chain runs to 146 residues: Type II secretion system core protein G (146 aa).

Positions 1–9 are cleaved as a propeptide — leader sequence; that stretch reads MKKMRKQTG. F10 carries the post-translational modification N-methylphenylalanine. A helical membrane pass occupies residues 10 to 30; that stretch reads FTLLEVMVVVVILGILASFVV.

The protein belongs to the GSP G family. As to quaternary structure, type II secretion system is composed of four main components: the outer membrane complex, the inner membrane complex, the cytoplasmic secretion ATPase and the periplasm-spanning pseudopilus. Forms homomultimers. Interacts with EspL. Cleaved by the prepilin peptidase. Post-translationally, methylated by prepilin peptidase at the amino group of the N-terminal phenylalanine once the leader sequence is cleaved.

The protein localises to the cell inner membrane. In terms of biological role, core component of the type II secretion system required for the energy-dependent secretion of extracellular factors such as proteases and toxins from the periplasm. Pseudopilin (pilin-like) protein that polymerizes to form the pseudopilus. Further polymerization triggers pseudopilus growth. This is Type II secretion system core protein G (epsG) from Vibrio cholerae serotype O1 (strain ATCC 39315 / El Tor Inaba N16961).